The chain runs to 646 residues: Macrolide export ATP-binding/permease protein MacB (646 aa).

The 239-residue stretch at Ile5–Gln243 folds into the ABC transporter domain. Gly41–Ser48 contributes to the ATP binding site. The next 4 membrane-spanning stretches (helical) occupy residues Thr272–Gly292, Phe518–Met538, Ile570–Ile590, and Ala611–Ala631.

This sequence belongs to the ABC transporter superfamily. Macrolide exporter (TC 3.A.1.122) family. Homodimer. Part of the tripartite efflux system MacAB-TolC, which is composed of an inner membrane transporter, MacB, a periplasmic membrane fusion protein, MacA, and an outer membrane component, TolC. The complex forms a large protein conduit and can translocate molecules across both the inner and outer membranes. Interacts with MacA.

The protein resides in the cell inner membrane. Its function is as follows. Part of the tripartite efflux system MacAB-TolC. MacB is a non-canonical ABC transporter that contains transmembrane domains (TMD), which form a pore in the inner membrane, and an ATP-binding domain (NBD), which is responsible for energy generation. Confers resistance against macrolides. In Escherichia coli, this protein is Macrolide export ATP-binding/permease protein MacB.